The following is a 228-amino-acid chain: MNNIFYNDYISNGLLEVLLINDYITNGFKVEFLDIFYIISITFGVFTIISRNPVVSVLFLIGLFVNIAGILILAGINYLGLSYILVYVGAVSILFLFILMLINIRISELLSETNNDIPLAVLTVLLFYYIIGQVLPCNLTDKTIISSLSNRFTGIYNIDISNQSSIVGINQEIGYVSSKGWDNTLVEFTQISGIGNIMYTNYSIWLIISSVILLLGMVGAIVITIKQK.

The protein resides in the mitochondrion. This is an uncharacterized protein from Emericella nidulans (Aspergillus nidulans).